Reading from the N-terminus, the 847-residue chain is FAST kinase domain-containing protein 1, mitochondrial (847 aa).

N6-acetyllysine is present on K360. The region spanning 777–837 (IALEFLDSKA…KDARMDYLRE (61 aa)) is the RAP domain.

Belongs to the FAST kinase family. Expression detected in spleen, thymus, testis, ovary, colon, heart, smooth muscle, kidney, brain, lung, liver and white adipose tissue with highest expression in heart.

The protein localises to the mitochondrion. Involved in the down-regulation of mitochondrial MT-ND3 mRNA levels which leads to decreased respiratory complex I abundance and activity. The chain is FAST kinase domain-containing protein 1, mitochondrial (FASTKD1) from Homo sapiens (Human).